The sequence spans 105 residues: Flagellar transcriptional regulator FlhD (105 aa).

The protein belongs to the FlhD family. Homodimer; disulfide-linked. Forms a heterohexamer composed of two FlhC and four FlhD subunits. Each FlhC binds a FlhD dimer, forming a heterotrimer, and a hexamer assembles by dimerization of two heterotrimers.

Its subcellular location is the cytoplasm. Functions in complex with FlhC as a master transcriptional regulator that regulates transcription of several flagellar and non-flagellar operons by binding to their promoter region. Activates expression of class 2 flagellar genes, including fliA, which is a flagellum-specific sigma factor that turns on the class 3 genes. Also regulates genes whose products function in a variety of physiological pathways. The protein is Flagellar transcriptional regulator FlhD of Cupriavidus pinatubonensis (strain JMP 134 / LMG 1197) (Cupriavidus necator (strain JMP 134)).